Reading from the N-terminus, the 349-residue chain is Protein Wnt-7b (349 aa).

Residues 1-24 form the signal peptide; that stretch reads MHRNFRKWIFYVFLCFGVLYVKLG. Intrachain disulfides connect C73/C84, C123/C131, C133/C152, C200/C214, and C202/C209. N83 and N127 each carry an N-linked (GlcNAc...) asparagine glycan. The O-palmitoleoyl serine; by PORCN moiety is linked to residue S206. The segment at 238 to 266 is disordered linker; that stretch reads VEVVRASRLRQPTFLRIKQLRSYQKPMET. 6 disulfides stabilise this stretch: C278-C309, C294-C304, C308-C348, C324-C339, C326-C336, and C331-C332. N295 carries N-linked (GlcNAc...) asparagine glycosylation.

This sequence belongs to the Wnt family. Forms a soluble 1:1 complex with AFM; this prevents oligomerization and is required for prolonged biological activity. The complex with AFM may represent the physiological form in body fluids. Interacts with FZD1 and FZD10. Interacts with FZD4 (in vitro). Interacts with PORCN. Interacts with glypican GPC3. Interacts (via intrinsically disordered linker region) with RECK; interaction with RECK confers ligand selectivity for Wnt7 in brain endothelial cells and allows these cells to selectively respond to Wnt7. In terms of processing, palmitoleoylation is required for efficient binding to frizzled receptors. Depalmitoleoylation leads to Wnt signaling pathway inhibition.

It localises to the secreted. The protein resides in the extracellular space. The protein localises to the extracellular matrix. In terms of biological role, ligand for members of the frizzled family of seven transmembrane receptors that functions in the canonical Wnt/beta-catenin signaling pathway. Required for normal fusion of the chorion and the allantois during placenta development. Required for central nervous system (CNS) angiogenesis and blood-brain barrier regulation. This Mus musculus (Mouse) protein is Protein Wnt-7b (Wnt7b).